Reading from the N-terminus, the 451-residue chain is Heme sensor protein HssS (451 aa).

A run of 2 helical transmembrane segments spans residues 9 to 29 and 164 to 184; these read IAIYAITVILFSALMSFLFTN and IFLAVLITLLLIISISLVIAS. Residues 186–238 enclose the HAMP domain; it reads YSIIKPVTALKNATTRIMKGDFSTPIKQTRHDEIGTLQSRFNTMRQNLGQVDQ. The 206-residue stretch at 246–451 folds into the Histidine kinase domain; it reads NVSHEVKTPL…KTQFIVKLFI (206 aa). Phosphohistidine; by autocatalysis is present on His-249.

Post-translationally, autophosphorylated.

Its subcellular location is the cell membrane. The catalysed reaction is ATP + protein L-histidine = ADP + protein N-phospho-L-histidine.. In terms of biological role, member of the two-component regulatory system HssS/HssR involved in intracellular heme homeostasis and tempering of staphylococcal virulence. HssS functions as a heme sensor histidine kinase which is autophosphorylated at a histidine residue and transfers its phosphate group to an aspartate residue of HssR. HssR/HssS activates the expression of HrtAB, an efflux pump, in response to extracellular heme, hemin, hemoglobin or blood. This chain is Heme sensor protein HssS (hssS), found in Staphylococcus epidermidis (strain ATCC 35984 / DSM 28319 / BCRC 17069 / CCUG 31568 / BM 3577 / RP62A).